Reading from the N-terminus, the 927-residue chain is Small conductance calcium-activated potassium channel protein (927 aa).

Polar residues predominate over residues 1 to 31; that stretch reads MSIQKLNDTTNSGYVSSEETDSLLVSSSNPS. Disordered regions lie at residues 1–131, 181–251, and 296–336; these read MSIQ…EDVE, LSLK…VKSA, and HLHQ…SSST. The segment covering 45-62 has biased composition (low complexity); the sequence is SNSTNGPTTGASTSSSGS. Over residues 63-77 the composition is skewed to gly residues; it reads VSGGGGGSGSGGGSA. Composition is skewed to polar residues over residues 95-107 and 200-214; these read TSTYLTSPQQSQH and NLGTSSYQNLASSIP. Composition is skewed to low complexity over residues 219–232 and 296–308; these read SRCRACRNCSRRAS and HLHQQQLQQSQQQ. A compositionally biased stretch (polar residues) spans 314 to 336; it reads ITSSPTNGSRIIRQSSQPESSST. Residues 489 to 509 form a helical membrane-spanning segment; that stretch reads ALVMGMFGIIVMVIENELSSA. Residues 530–550 traverse the membrane as a helical segment; that stretch reads TVILLGLIVAYHALEVQLFMI. A helical transmembrane segment spans residues 569-589; sequence IGLELFICAIHPIPGEYYFQW. Residues 609-629 form a helical membrane-spanning segment; it reads VALSLPMFLRLYLICRVMLLH. A helical membrane pass occupies residues 658–678; the sequence is LMTICPGTVLLVFMVSLWIIA. The pore-forming intramembrane region spans 696–716; the sequence is LLNSMWLTAITFLCVGYGDIV. A helical membrane pass occupies residues 724 to 744; the sequence is GITLTCGMVGAGCTALLVAVV. Residues 763 to 839 are calmodulin-binding; sequence DTQLTKRLKN…ITDMAKTQNT (77 aa).

Belongs to the potassium channel KCNN family. SK subfamily. In terms of assembly, heterooligomer. The complex is composed of 4 channel subunits each of which binds to a calmodulin subunit which regulates the channel activity through calcium-binding.

The protein resides in the membrane. Forms a voltage-independent potassium channel activated by intracellular calcium. Activation is followed by membrane hyperpolarization. Thought to regulate neuronal excitability by contributing to the slow component of synaptic afterhyperpolarization. The channel is blocked by apamin. This is Small conductance calcium-activated potassium channel protein from Drosophila melanogaster (Fruit fly).